Consider the following 586-residue polypeptide: Dual specificity tyrosine-phosphorylation-regulated kinase 3 (586 aa).

A compositionally biased stretch (basic and acidic residues) spans 1 to 13 (MGGAARERGRKDA). The tract at residues 1–187 (MGGAARERGR…QGVIGGPNNG (187 aa)) is disordered. Residues 208–521 (YEVLKIIGKG…PAQALRHPWI (314 aa)) form the Protein kinase domain. ATP-binding positions include 214–222 (IGKGSFGQV), Lys-237, and 287–290 (FELL). Asp-334 functions as the Proton acceptor in the catalytic mechanism. The residue at position 368 (Tyr-368) is a Phosphotyrosine. Residues 467 to 480 (RSRRGKKRGPPGSK) carry the Nuclear localization signal motif.

The protein belongs to the protein kinase superfamily. CMGC Ser/Thr protein kinase family. MNB/DYRK subfamily. As to quaternary structure, interacts with SIRT1. It depends on Mg(2+) as a cofactor. Protein kinase activity is activated following autophosphorylation at Tyr-368. In terms of processing, ubiquitinated at anaphase by the anaphase-promoting complex (APC/C), leading to its degradation by the proteasome. As to expression, expressed predominantly in testis. Expressed in late pachytene spermatocytes.

It localises to the nucleus. The protein localises to the cytoplasm. It is found in the nucleus speckle. The protein resides in the cytoplasmic granule. Its subcellular location is the cytoskeleton. It localises to the microtubule organizing center. The protein localises to the centrosome. It carries out the reaction L-seryl-[protein] + ATP = O-phospho-L-seryl-[protein] + ADP + H(+). The catalysed reaction is L-threonyl-[protein] + ATP = O-phospho-L-threonyl-[protein] + ADP + H(+). The enzyme catalyses L-tyrosyl-[protein] + ATP = O-phospho-L-tyrosyl-[protein] + ADP + H(+). Protein kinase activity is activated following autophosphorylation at Tyr-368. Its function is as follows. Dual-specificity protein kinase that promotes disassembly of several types of membraneless organelles during mitosis, such as stress granules, nuclear speckles and pericentriolar material. Dual-specificity tyrosine-regulated kinases (DYRKs) autophosphorylate a critical tyrosine residue in their activation loop and phosphorylate their substrate on serine and threonine residues. Acts as a central dissolvase of membraneless organelles during the G2-to-M transition, after the nuclear-envelope breakdown: acts by mediating phosphorylation of multiple serine and threonine residues in unstructured domains of proteins, such as SRRM1 and PCM1. Does not mediate disassembly of all membraneless organelles: disassembly of P-body and nucleolus is not regulated by DYRK3. Dissolution of membraneless organelles at the onset of mitosis is also required to release mitotic regulators, such as ZNF207, from liquid-unmixed organelles where they are sequestered and keep them dissolved during mitosis. Regulates mTORC1 by mediating the dissolution of stress granules: during stressful conditions, DYRK3 partitions from the cytosol to the stress granule, together with mTORC1 components, which prevents mTORC1 signaling. When stress signals are gone, the kinase activity of DYRK3 is required for the dissolution of stress granule and mTORC1 relocation to the cytosol: acts by mediating the phosphorylation of the mTORC1 inhibitor AKT1S1, allowing full reactivation of mTORC1 signaling. Also acts as a negative regulator of EPO-dependent erythropoiesis: may place an upper limit on red cell production during stress erythropoiesis. Inhibits cell death due to cytokine withdrawal in hematopoietic progenitor cells. Promotes cell survival upon genotoxic stress through phosphorylation of SIRT1: this in turn inhibits p53/TP53 activity and apoptosis. This Rattus norvegicus (Rat) protein is Dual specificity tyrosine-phosphorylation-regulated kinase 3.